Consider the following 906-residue polypeptide: Envelope glycoprotein B (906 aa).

The N-terminal stretch at 1 to 31 (MESRIWCLVVCVNLCIVCLGAAVSSSSTSHA) is a signal peptide. Low complexity predominate over residues 29–46 (SHATSSTHNGSHTSRTTS). The segment at 29–51 (SHATSSTHNGSHTSRTTSAQTRS) is disordered. Topologically, residues 32–750 (TSSTHNGSHT…EGVATFLKNP (719 aa)) are virion surface. N-linked (GlcNAc...) asparagine; by host glycosylation is found at Asn37, Asn68, Asn73, and Asn85. 5 cysteine pairs are disulfide-bonded: Cys94/Cys550, Cys111/Cys506, Cys185/Cys250, Cys246/Cys250, and Cys344/Cys391. Residues 152 to 158 (SYAYIYT) are involved in fusion and/or binding to host membrane. N-linked (GlcNAc...) asparagine; by host glycosylation is present at Asn208. Residues 237–244 (GSTWLYRE) form an involved in fusion and/or binding to host membrane region. Residues Asn281, Asn286, Asn302, Asn341, Asn383, Asn405, Asn409, Asn417, Asn447, Asn452, Asn464, Asn465, Asn554, and Asn585 are each glycosylated (N-linked (GlcNAc...) asparagine; by host). Cys573 and Cys610 are disulfide-bonded. 2 hydrophobic membrane proximal region regions span residues 696-748 (VEDK…TFLK) and 727-747 (VAIG…ATFL). The chain crosses the membrane as a helical span at residues 751-771 (FGAFTIILVAIAVVIITYLIY). Residues 772 to 906 (TRQRRLCTQP…LKDSDEEENV (135 aa)) are Intravirion-facing. Polar residues-rich tracts occupy residues 797–809 (VTSG…SLQA) and 859–876 (RAQQ…GTQD). Disordered stretches follow at residues 797–837 (VTSG…TAAP) and 856–906 (AEQR…EENV). Positions 877–886 (KGQKPNLLDR) are enriched in basic and acidic residues. An Internalization motif motif is present at residues 894–897 (YRHL).

Belongs to the herpesviridae glycoprotein B family. Homotrimer; disulfide-linked. Binds to heparan sulfate proteoglycans. Interacts with gH/gL heterodimer. Interacts with host TLR1 and TLR2. Interacts with host C-type lectin CD209/DC-SIGN. Interacts with host ITGB1, EGFR, and PDGFRA. A proteolytic cleavage by host furin generates two subunits that remain linked by disulfide bonds.

The protein resides in the virion membrane. Its subcellular location is the host cell membrane. It is found in the host endosome membrane. The protein localises to the host Golgi apparatus membrane. Its function is as follows. Envelope glycoprotein that plays a role in host cell entry, cell to-cell virus transmission, and fusion of infected cells. May be involved in the initial attachment via binding to heparan sulfate together with the gM/gN complex that binds heparin with higher affinity. Interacts with host integrin ITGB1, PDGFRA and EGFR that likely serve as postattachment entry receptors. Also participates in the fusion of viral and cellular membranes leading to virus entry into the host cell. Membrane fusion is mediated by the fusion machinery composed at least of gB and the heterodimer gH/gL. The sequence is that of Envelope glycoprotein B from Human cytomegalovirus (strain AD169) (HHV-5).